Consider the following 371-residue polypeptide: tRNA 2-selenouridine synthase (371 aa).

Residues 12–135 (FLDDVPMMDM…MRTFLLDTTQ (124 aa)) form the Rhodanese domain. The S-selanylcysteine intermediate role is filled by cysteine 95.

This sequence belongs to the SelU family. Monomer.

It catalyses the reaction 5-methylaminomethyl-2-thiouridine(34) in tRNA + selenophosphate + (2E)-geranyl diphosphate + H2O + H(+) = 5-methylaminomethyl-2-selenouridine(34) in tRNA + (2E)-thiogeraniol + phosphate + diphosphate. The enzyme catalyses 5-methylaminomethyl-2-thiouridine(34) in tRNA + (2E)-geranyl diphosphate = 5-methylaminomethyl-S-(2E)-geranyl-thiouridine(34) in tRNA + diphosphate. It carries out the reaction 5-methylaminomethyl-S-(2E)-geranyl-thiouridine(34) in tRNA + selenophosphate + H(+) = 5-methylaminomethyl-2-(Se-phospho)selenouridine(34) in tRNA + (2E)-thiogeraniol. The catalysed reaction is 5-methylaminomethyl-2-(Se-phospho)selenouridine(34) in tRNA + H2O = 5-methylaminomethyl-2-selenouridine(34) in tRNA + phosphate. Functionally, involved in the post-transcriptional modification of the uridine at the wobble position (U34) of tRNA(Lys), tRNA(Glu) and tRNA(Gln). Catalyzes the conversion of 2-thiouridine (S2U-RNA) to 2-selenouridine (Se2U-RNA). Acts in a two-step process involving geranylation of 2-thiouridine (S2U) to S-geranyl-2-thiouridine (geS2U) and subsequent selenation of the latter derivative to 2-selenouridine (Se2U) in the tRNA chain. The polypeptide is tRNA 2-selenouridine synthase (Pseudomonas entomophila (strain L48)).